The following is a 187-amino-acid chain: ATP synthase subunit delta, chloroplastic (187 aa).

This sequence belongs to the ATPase delta chain family. As to quaternary structure, F-type ATPases have 2 components, F(1) - the catalytic core - and F(0) - the membrane proton channel. F(1) has five subunits: alpha(3), beta(3), gamma(1), delta(1), epsilon(1). CF(0) has four main subunits: a(1), b(1), b'(1) and c(10-14). The alpha and beta chains form an alternating ring which encloses part of the gamma chain. F(1) is attached to F(0) by a central stalk formed by the gamma and epsilon chains, while a peripheral stalk is formed by the delta, b and b' chains.

Its subcellular location is the plastid. It is found in the chloroplast thylakoid membrane. In terms of biological role, f(1)F(0) ATP synthase produces ATP from ADP in the presence of a proton or sodium gradient. F-type ATPases consist of two structural domains, F(1) containing the extramembraneous catalytic core and F(0) containing the membrane proton channel, linked together by a central stalk and a peripheral stalk. During catalysis, ATP synthesis in the catalytic domain of F(1) is coupled via a rotary mechanism of the central stalk subunits to proton translocation. This protein is part of the stalk that links CF(0) to CF(1). It either transmits conformational changes from CF(0) to CF(1) or is implicated in proton conduction. The chain is ATP synthase subunit delta, chloroplastic from Thalassiosira pseudonana (Marine diatom).